We begin with the raw amino-acid sequence, 300 residues long: MSTPFVTTLSPSLHGLLKDRLEEKGFILTQPQYTIFQARSPSVTCVLYSSGKLVVQGKGSKEFIKFFLEPEILLTFTHNRVEEDLRPRLGVDESGKGDFFGPLCIAGVYAKDEETLKNLYKTKIQDSKLLNDAQILSLAKTIRASCSCDVMILYPEKYNELYGKFHNLNILLAWAHATIIDQLAPRPSGEVFAISDQFASSESVLLNALRKKNTDISVIQKVRAEQDIVVAAASILAREAFITAMTKLEQRFSLKLPKGASAQVKSVGKSILNSRGKEVLSLICKTHFKTFNEICDSASA.

The region spanning 86–300 is the RNase H type-2 domain; the sequence is RPRLGVDESG…FNEICDSASA (215 aa). Positions 92, 93, and 196 each coordinate a divalent metal cation.

The protein belongs to the RNase HII family. RnhC subfamily. Requires Mn(2+) as cofactor. Mg(2+) is required as a cofactor.

Its subcellular location is the cytoplasm. It catalyses the reaction Endonucleolytic cleavage to 5'-phosphomonoester.. In terms of biological role, endonuclease that specifically degrades the RNA of RNA-DNA hybrids. The protein is Ribonuclease HIII of Chlamydia caviae (strain ATCC VR-813 / DSM 19441 / 03DC25 / GPIC) (Chlamydophila caviae).